The sequence spans 108 residues: MLKSNLEVDNRFSLIGKVADFPKRNKSPSGIDHCLFYLEHRSNKKEAGFTRQAWCKIAIQISGNQLIEKTQSITVGQQLLVVGFVTSHRSSNGLNQLILHAEQIEFIE.

Residues 8 to 108 (VDNRFSLIGK…LHAEQIEFIE (101 aa)) form the SSB domain.

Belongs to the PriB family. As to quaternary structure, homodimer. Interacts with PriA and DnaT. Component of the replication restart primosome. Primosome assembly occurs via a 'hand-off' mechanism. PriA binds to replication forks, subsequently PriB then DnaT bind; DnaT then displaces ssDNA to generate the helicase loading substrate.

Involved in the restart of stalled replication forks, which reloads the replicative helicase on sites other than the origin of replication; the PriA-PriB pathway is the major replication restart pathway. During primosome assembly it facilitates complex formation between PriA and DnaT on DNA; stabilizes PriA on DNA. Stimulates the DNA unwinding activity of PriA helicase. The polypeptide is Replication restart protein PriB (Histophilus somni (strain 2336) (Haemophilus somnus)).